The sequence spans 333 residues: Probable ABC transporter permease protein y4mJ (333 aa).

Transmembrane regions (helical) follow at residues 30–50 (LAIAGAIVLLVLAVGTQVPQA), 62–82 (AGAPLIIMSLGVLLVVITGGI), 84–104 (LSVGSVFSLTGMVTAQAMASG), 110–130 (ALIGLGVGLVFGSINGFLVTV), 133–153 (LAPFVVTLITFAVAGSLAFIV), 175–195 (IPGVPNYILFCIVLLVVIEIF), 228–248 (FAYVASSLLASFSGLLTISYI), 253–273 (STAGSSLMLQAIAAVVIGGAS), 274–294 (LLGGTGTAVGAVLGALMITVI), and 300–320 (LIGINSFWQGSVTGLAILIAV).

The protein belongs to the binding-protein-dependent transport system permease family. AraH/RbsC subfamily.

It is found in the cell inner membrane. Functionally, probably part of the binding-protein-dependent transport system y4mIJK. This system probably transports a sugar. Probably responsible for the translocation of the substrate across the membrane. The polypeptide is Probable ABC transporter permease protein y4mJ (Sinorhizobium fredii (strain NBRC 101917 / NGR234)).